The sequence spans 260 residues: UPF0246 protein BURPS668_1321 (260 aa).

It belongs to the UPF0246 family.

This is UPF0246 protein BURPS668_1321 from Burkholderia pseudomallei (strain 668).